Reading from the N-terminus, the 452-residue chain is Bifunctional protein GlmU (452 aa).

The interval 1 to 232 (MTSRTSLTIV…EDEVRGINTK (232 aa)) is pyrophosphorylase. UDP-N-acetyl-alpha-D-glucosamine contacts are provided by residues 11–14 (LAAG), Lys25, Gln78, and 83–84 (GT). Position 108 (Asp108) interacts with Mg(2+). Residues Gly144, Glu158, Asn173, and Asn230 each contribute to the UDP-N-acetyl-alpha-D-glucosamine site. Mg(2+) is bound at residue Asn230. Residues 233-253 (AQLAEAEAVMQARLRQAALDA) form a linker region. The tract at residues 254–452 (GVTMIAPETV…KTRGKTRPAK (199 aa)) is N-acetyltransferase. UDP-N-acetyl-alpha-D-glucosamine contacts are provided by Arg319 and Lys337. Residue His349 is the Proton acceptor of the active site. Residues Tyr352 and Asn363 each contribute to the UDP-N-acetyl-alpha-D-glucosamine site. Residues Ala366, 372 to 373 (NY), Ser391, Ser409, and Arg426 contribute to the acetyl-CoA site.

In the N-terminal section; belongs to the N-acetylglucosamine-1-phosphate uridyltransferase family. It in the C-terminal section; belongs to the transferase hexapeptide repeat family. As to quaternary structure, homotrimer. The cofactor is Mg(2+).

It localises to the cytoplasm. It catalyses the reaction alpha-D-glucosamine 1-phosphate + acetyl-CoA = N-acetyl-alpha-D-glucosamine 1-phosphate + CoA + H(+). It carries out the reaction N-acetyl-alpha-D-glucosamine 1-phosphate + UTP + H(+) = UDP-N-acetyl-alpha-D-glucosamine + diphosphate. It participates in nucleotide-sugar biosynthesis; UDP-N-acetyl-alpha-D-glucosamine biosynthesis; N-acetyl-alpha-D-glucosamine 1-phosphate from alpha-D-glucosamine 6-phosphate (route II): step 2/2. The protein operates within nucleotide-sugar biosynthesis; UDP-N-acetyl-alpha-D-glucosamine biosynthesis; UDP-N-acetyl-alpha-D-glucosamine from N-acetyl-alpha-D-glucosamine 1-phosphate: step 1/1. It functions in the pathway bacterial outer membrane biogenesis; LPS lipid A biosynthesis. In terms of biological role, catalyzes the last two sequential reactions in the de novo biosynthetic pathway for UDP-N-acetylglucosamine (UDP-GlcNAc). The C-terminal domain catalyzes the transfer of acetyl group from acetyl coenzyme A to glucosamine-1-phosphate (GlcN-1-P) to produce N-acetylglucosamine-1-phosphate (GlcNAc-1-P), which is converted into UDP-GlcNAc by the transfer of uridine 5-monophosphate (from uridine 5-triphosphate), a reaction catalyzed by the N-terminal domain. This is Bifunctional protein GlmU from Rhodopseudomonas palustris (strain BisA53).